The sequence spans 573 residues: Glutathione/L-cysteine transport system ATP-binding/permease protein CydC (573 aa).

The Cytoplasmic segment spans residues Met-1 to Lys-15. Helical transmembrane passes span Trp-16 to Leu-36 and Thr-37 to Phe-57. The ABC transmembrane type-1 domain occupies Leu-20 to Gln-306. Residues Asn-58–Arg-136 lie on the Cytoplasmic side of the membrane. A helical membrane pass occupies residues Val-137 to Phe-157. Residues Leu-158–Thr-161 lie on the Periplasmic side of the membrane. A helical transmembrane segment spans residues Leu-162 to Tyr-182. The Cytoplasmic segment spans residues Arg-183–Ala-249. A helical membrane pass occupies residues Ile-250–Val-270. Residues Gly-271–Pro-276 lie on the Periplasmic side of the membrane. Residues Gly-277–Val-297 form a helical membrane-spanning segment. Over Thr-298–Leu-573 the chain is Cytoplasmic. The 234-residue stretch at Leu-339–Gly-572 folds into the ABC transporter domain. Gly-373–Ser-380 lines the ATP pocket.

The protein belongs to the ABC transporter superfamily. Cysteine exporter (TC 3.A.1.129.1) family. Forms a heterodimer with CydD.

Its subcellular location is the cell inner membrane. It carries out the reaction L-cysteine(in) + ATP + H2O = L-cysteine(out) + ADP + phosphate + H(+). The enzyme catalyses glutathione(in) + ATP + H2O = glutathione(out) + ADP + phosphate + H(+). With respect to regulation, ATPase activity is stimulated by various thiol compounds. The presence of heme leads to a further enhancement of thiol-stimulated ATPase activity, although a large excess of heme inhibits activity. Glutathione transport is inhibited by sodium orthovanadate, an inhibitor of ABC-type transport systems, but not by the proton ionophore carbonyl cyanide m-chlorophenylhydrazone (CCCP). Functionally, part of the ABC transporter complex CydDC that exports the reduced low-molecular-weight thiols cysteine and glutathione to the periplasm. Export of these thiol-containing redox-active molecules may be crucial for redox homeostasis in the periplasm, permitting correct assembly of various respiratory complexes and formation of correct disulfide bonds in periplasmic and secreted proteins. CydC contains transmembrane domains (TMD), which form a pore in the inner membrane, and an ATP-binding domain (NBD), which is responsible for energy generation. Required for the assembly of functional cytochrome bd-type quinol oxidases and periplasmic c-type cytochromes. Overexpression of CydDC under anaerobic conditions also results in the formation of a heme biosynthesis-derived pigment, P-574. CydDC binds heme b, but heme is probably not transported by the complex and instead has a role in regulating ATPase activity. Its function is as follows. Conversely, a more recent study suggests an alternative function of CydDC: authors suggest that CydDC does not mediate the export of L-cysteine but rather reduces cytoplasmic L-cystine to L-cysteine. The principle function of CydDC would be to maintain the reduced state of cytoplasmic L-cysteine, thereby providing an important connection between sulfur metabolism, oxidative stress and resistance to antibiotics. In Escherichia coli (strain K12), this protein is Glutathione/L-cysteine transport system ATP-binding/permease protein CydC.